The sequence spans 120 residues: MFKKVDKKASRTKRHLRVRKKVFGTPDRPRLSVFRSEKNIYVQIIDDVNAVTIVAASSLDKEFSTNNGGNKEGAKLVGAAVAKKAIEKGITEVVFDRGGYVYHGRVQELAEGAREAGLKF.

The protein belongs to the universal ribosomal protein uL18 family. In terms of assembly, part of the 50S ribosomal subunit; part of the 5S rRNA/L5/L18/L25 subcomplex. Contacts the 5S and 23S rRNAs.

This is one of the proteins that bind and probably mediate the attachment of the 5S RNA into the large ribosomal subunit, where it forms part of the central protuberance. The protein is Large ribosomal subunit protein uL18 of Clostridium botulinum (strain Eklund 17B / Type B).